We begin with the raw amino-acid sequence, 545 residues long: Labda-7,13-dienyl diphosphate synthase (545 aa).

Residues 315-320 carry the DXDDTA motif motif; it reads DADDTA. Residues 444–450 carry the RXXDGSW motif motif; sequence RRTDGSW. A disordered region spans residues 526–545; it reads LPAPAPVPPGFDAARTGPAD.

This sequence belongs to the terpene synthase family. Mg(2+) is required as a cofactor.

The catalysed reaction is (2E,6E,10E)-geranylgeranyl diphosphate = (13E)-labda-7,13-dien-15-yl diphosphate. Its function is as follows. Involved in the biosynthesis of the labdane-type bicyclic diterpene labda-7,13(16),14-triene. Catalyzes the conversion of geranylgeranyl diphosphate (GGDP) into labda-7,13(E)-dienyl diphosphate. The polypeptide is Labda-7,13-dienyl diphosphate synthase (Streptomyces clavuligerus).